Consider the following 252-residue polypeptide: Ribosomal RNA small subunit methyltransferase NEP1 (252 aa).

Residues Met176, Gly209, Gly214, and 227–232 (ISNYPL) contribute to the S-adenosyl-L-methionine site.

This sequence belongs to the class IV-like SAM-binding methyltransferase superfamily. RNA methyltransferase NEP1 family. In terms of assembly, homodimer. Part of the small subunit (SSU) processome, composed of more than 70 proteins and the RNA chaperone small nucleolar RNA (snoRNA) U3.

Its subcellular location is the nucleus. The protein localises to the nucleolus. It catalyses the reaction a pseudouridine in rRNA + S-adenosyl-L-methionine = an N(1)-methylpseudouridine in rRNA + S-adenosyl-L-homocysteine + H(+). In terms of biological role, S-adenosyl-L-methionine-dependent pseudouridine N(1)-methyltransferase that methylates a pseudouridine in 18S rRNA. Involved the biosynthesis of the hypermodified N1-methyl-N3-(3-amino-3-carboxypropyl) pseudouridine (m1acp3-Psi) conserved in eukaryotic 18S rRNA. Also has an essential role in 40S ribosomal subunit biogenesis independent on its methyltransferase activity, facilitating the incorporation of ribosomal protein S19 during the formation of pre-ribosomes. Functionally, S-adenosyl-L-methionine-dependent pseudouridine N(1)-methyltransferase that methylates pseudouridine at position in 18S rRNA. Involved the biosynthesis of the hypermodified N1-methyl-N3-(3-amino-3-carboxypropyl) pseudouridine (m1acp3-Psi) conserved in eukaryotic 18S rRNA. Is not able to methylate uridine at this position. Also has an essential role in 40S ribosomal subunit biogenesis independent on its methyltransferase activity, facilitating the incorporation of ribosomal protein S19 during the formation of pre-ribosomes. Part of the small subunit (SSU) processome, first precursor of the small eukaryotic ribosomal subunit. During the assembly of the SSU processome in the nucleolus, many ribosome biogenesis factors, an RNA chaperone and ribosomal proteins associate with the nascent pre-rRNA and work in concert to generate RNA folding, modifications, rearrangements and cleavage as well as targeted degradation of pre-ribosomal RNA by the RNA exosome. This Drosophila melanogaster (Fruit fly) protein is Ribosomal RNA small subunit methyltransferase NEP1.